Consider the following 231-residue polypeptide: 2,3-bisphosphoglycerate-dependent phosphoglycerate mutase (231 aa).

Substrate is bound by residues Arg10–Asn17, Thr23–Gly24, Arg62, Glu89–Tyr92, Lys100, Arg116–Arg117, and Gly185–Asn186. The Tele-phosphohistidine intermediate role is filled by His11. Glu89 serves as the catalytic Proton donor/acceptor.

The protein belongs to the phosphoglycerate mutase family. BPG-dependent PGAM subfamily. As to quaternary structure, homodimer.

The enzyme catalyses (2R)-2-phosphoglycerate = (2R)-3-phosphoglycerate. The protein operates within carbohydrate degradation; glycolysis; pyruvate from D-glyceraldehyde 3-phosphate: step 3/5. Its function is as follows. Catalyzes the interconversion of 2-phosphoglycerate and 3-phosphoglycerate. The protein is 2,3-bisphosphoglycerate-dependent phosphoglycerate mutase of Buchnera aphidicola subsp. Acyrthosiphon pisum (strain 5A).